The primary structure comprises 493 residues: Ketol-acid reductoisomerase (NADP(+)) (493 aa).

A KARI N-terminal Rossmann domain is found at Ala15 to Ser208. NADP(+) contacts are provided by residues Cys45 to Gln48, Arg68, Arg76, Ser78, and Asp108 to Gln110. His132 is a catalytic residue. Gly158 lines the NADP(+) pocket. 2 consecutive KARI C-terminal knotted domains span residues Ser209–Ala344 and Phe345–Met486. Asp217, Glu221, Glu389, and Glu393 together coordinate Mg(2+). A substrate-binding site is contributed by Ser414.

Belongs to the ketol-acid reductoisomerase family. The cofactor is Mg(2+).

The enzyme catalyses (2R)-2,3-dihydroxy-3-methylbutanoate + NADP(+) = (2S)-2-acetolactate + NADPH + H(+). It catalyses the reaction (2R,3R)-2,3-dihydroxy-3-methylpentanoate + NADP(+) = (S)-2-ethyl-2-hydroxy-3-oxobutanoate + NADPH + H(+). It functions in the pathway amino-acid biosynthesis; L-isoleucine biosynthesis; L-isoleucine from 2-oxobutanoate: step 2/4. Its pathway is amino-acid biosynthesis; L-valine biosynthesis; L-valine from pyruvate: step 2/4. In terms of biological role, involved in the biosynthesis of branched-chain amino acids (BCAA). Catalyzes an alkyl-migration followed by a ketol-acid reduction of (S)-2-acetolactate (S2AL) to yield (R)-2,3-dihydroxy-isovalerate. In the isomerase reaction, S2AL is rearranged via a Mg-dependent methyl migration to produce 3-hydroxy-3-methyl-2-ketobutyrate (HMKB). In the reductase reaction, this 2-ketoacid undergoes a metal-dependent reduction by NADPH to yield (R)-2,3-dihydroxy-isovalerate. The protein is Ketol-acid reductoisomerase (NADP(+)) of Aeromonas salmonicida (strain A449).